Consider the following 201-residue polypeptide: Probable GTP-binding protein EngB (201 aa).

In terms of domain architecture, EngB-type G spans 21–191 (PEAQIALAGR…WQELARAAGV (171 aa)). GTP contacts are provided by residues 29–36 (GRSNVGKS), 56–60 (GKTRS), 75–78 (DLPG), 142–145 (TKAD), and 168–172 (VLTSS). Positions 36 and 58 each coordinate Mg(2+).

The protein belongs to the TRAFAC class TrmE-Era-EngA-EngB-Septin-like GTPase superfamily. EngB GTPase family. Requires Mg(2+) as cofactor.

Its function is as follows. Necessary for normal cell division and for the maintenance of normal septation. The chain is Probable GTP-binding protein EngB from Desulfovibrio desulfuricans (strain ATCC 27774 / DSM 6949 / MB).